A 216-amino-acid polypeptide reads, in one-letter code: Probable transaldolase (216 aa).

The Schiff-base intermediate with substrate role is filled by Lys84.

The protein belongs to the transaldolase family. Type 3B subfamily.

The protein resides in the cytoplasm. The catalysed reaction is D-sedoheptulose 7-phosphate + D-glyceraldehyde 3-phosphate = D-erythrose 4-phosphate + beta-D-fructose 6-phosphate. It participates in carbohydrate degradation; pentose phosphate pathway; D-glyceraldehyde 3-phosphate and beta-D-fructose 6-phosphate from D-ribose 5-phosphate and D-xylulose 5-phosphate (non-oxidative stage): step 2/3. Its function is as follows. Transaldolase is important for the balance of metabolites in the pentose-phosphate pathway. In Lysinibacillus sphaericus (strain C3-41), this protein is Probable transaldolase.